A 435-amino-acid polypeptide reads, in one-letter code: Serine/threonine-protein kinase 40 (435 aa).

A compositionally biased stretch (basic and acidic residues) spans 1–10; the sequence is MKRRASDRGA. A disordered region spans residues 1-25; it reads MKRRASDRGAGETSARAKALGSGIS. The 297-residue stretch at 35 to 331 folds into the Protein kinase domain; the sequence is FILGPRLGNS…ADVLEALSAI (297 aa). ATP is bound by residues 41 to 49 and lysine 66; that span reads LGNSPVPSI. The active-site Proton acceptor is the arginine 196.

Belongs to the protein kinase superfamily. CAMK Ser/Thr protein kinase family. In terms of tissue distribution, strongly expressed in heart, brain, placenta, lung, skeletal muscle, kidney, spleen, thymus, prostate, liver, pancreas, testis, ovary, small intestine, colon and peripheral blood leukocytes.

Its subcellular location is the nucleus. The protein resides in the cytoplasm. The enzyme catalyses L-seryl-[protein] + ATP = O-phospho-L-seryl-[protein] + ADP + H(+). It carries out the reaction L-threonyl-[protein] + ATP = O-phospho-L-threonyl-[protein] + ADP + H(+). In terms of biological role, may be a negative regulator of NF-kappa-B and p53-mediated gene transcription. This Homo sapiens (Human) protein is Serine/threonine-protein kinase 40 (STK40).